Here is a 70-residue protein sequence, read N- to C-terminus: Protein SlyX homolog (70 aa).

This sequence belongs to the SlyX family.

The sequence is that of Protein SlyX homolog from Shewanella oneidensis (strain ATCC 700550 / JCM 31522 / CIP 106686 / LMG 19005 / NCIMB 14063 / MR-1).